The following is a 64-amino-acid chain: Large ribosomal subunit protein bL33c (64 aa).

It belongs to the bacterial ribosomal protein bL33 family.

The protein resides in the plastid. The protein localises to the cyanelle. The sequence is that of Large ribosomal subunit protein bL33c (rpl33) from Cyanophora paradoxa.